The chain runs to 269 residues: 4-hydroxy-tetrahydrodipicolinate reductase (269 aa).

NAD(+) contacts are provided by residues 8 to 13 (GAAGRM) and glutamate 34. Arginine 35 is an NADP(+) binding site. NAD(+) is bound by residues 98-100 (GTT) and 122-125 (APNY). The active-site Proton donor/acceptor is histidine 155. Histidine 156 is a (S)-2,3,4,5-tetrahydrodipicolinate binding site. The active-site Proton donor is the lysine 159. Position 165 to 166 (165 to 166 (GT)) interacts with (S)-2,3,4,5-tetrahydrodipicolinate.

This sequence belongs to the DapB family.

It is found in the cytoplasm. The catalysed reaction is (S)-2,3,4,5-tetrahydrodipicolinate + NAD(+) + H2O = (2S,4S)-4-hydroxy-2,3,4,5-tetrahydrodipicolinate + NADH + H(+). The enzyme catalyses (S)-2,3,4,5-tetrahydrodipicolinate + NADP(+) + H2O = (2S,4S)-4-hydroxy-2,3,4,5-tetrahydrodipicolinate + NADPH + H(+). It functions in the pathway amino-acid biosynthesis; L-lysine biosynthesis via DAP pathway; (S)-tetrahydrodipicolinate from L-aspartate: step 4/4. Functionally, catalyzes the conversion of 4-hydroxy-tetrahydrodipicolinate (HTPA) to tetrahydrodipicolinate. The polypeptide is 4-hydroxy-tetrahydrodipicolinate reductase (Vibrio atlanticus (strain LGP32) (Vibrio splendidus (strain Mel32))).